A 400-amino-acid chain; its full sequence is Large envelope protein (400 aa).

Met1 bears the N-acetylmethionine mark. The N-myristoyl glycine; by host moiety is linked to residue Gly2. The segment at 2–119 (GGWSSKPRQG…PPLRDSHPQA (118 aa)) is pre-S1. The pre-S stretch occupies residues 2 to 174 (GGWSSKPRQG…FSRIGDPALN (173 aa)). Over 2–181 (GGWSSKPRQG…ALNMENITSG (180 aa)) the chain is Virion surface; in external conformation. Residues 2 to 253 (GGWSSKPRQG…PGYRWMCLRR (252 aa)) lie on the Intravirion; in internal conformation side of the membrane. An N-linked (GlcNAc...) asparagine glycan is attached at Trp4. The interval 85-118 (LTTVPAAPPPASSNRQSGKQPTPISPPLRDSHPQ) is disordered. Polar residues predominate over residues 96–106 (SSNRQSGKQPT). The tract at residues 120-174 (MQWNSTTFHQTLQDPRVRGLYFPAGGSSSGTVNPVPTTASPISSIFSRIGDPALN) is pre-S2. Residues 182–202 (FLGPLLVLQAGFFLLTRILTI) traverse the membrane as a helical segment. At 203–253 (PQSLDSWWTSLNFLGGTTVCLGQNSQSPISNHSPTSCPPTCPGYRWMCLRR) the chain is on the intravirion; in external conformation side. The chain crosses the membrane as a helical span at residues 254-274 (FIIFLFILLLCLIFLLVLLDY). Residues 275–348 (QGMLPVCPLI…WASARFSWLS (74 aa)) lie on the Virion surface side of the membrane. Asn320 is a glycosylation site (N-linked (GlcNAc...) asparagine; by host). The chain crosses the membrane as a helical span at residues 349 to 369 (LLVPFVQWFVGLSPTVWLSVI). The Intravirion segment spans residues 370-375 (WMMWYW). The chain crosses the membrane as a helical span at residues 376–398 (GPSLYSILSPFLPLLPIFFCLWV). At 399 to 400 (YI) the chain is on the virion surface side.

It belongs to the orthohepadnavirus major surface antigen family. In terms of assembly, in its internal form (Li-HBsAg), interacts with the capsid protein and with the isoform S. Interacts with host chaperone CANX. As to quaternary structure, associates with host chaperone CANX through its pre-S2 N glycan; this association may be essential for isoform M proper secretion. Interacts with isoform L. Interacts with the antigens of satellite virus HDV (HDVAgs); this interaction is required for encapsidation of HDV genomic RNA. Isoform M is N-terminally acetylated by host at a ratio of 90%, and N-glycosylated by host at the pre-S2 region. Post-translationally, myristoylated.

The protein localises to the virion membrane. In terms of biological role, the large envelope protein exists in two topological conformations, one which is termed 'external' or Le-HBsAg and the other 'internal' or Li-HBsAg. In its external conformation the protein attaches the virus to cell receptors and thereby initiating infection. This interaction determines the species specificity and liver tropism. This attachment induces virion internalization predominantly through caveolin-mediated endocytosis. The large envelope protein also assures fusion between virion membrane and endosomal membrane. In its internal conformation the protein plays a role in virion morphogenesis and mediates the contact with the nucleocapsid like a matrix protein. Its function is as follows. The middle envelope protein plays an important role in the budding of the virion. It is involved in the induction of budding in a nucleocapsid independent way. In this process the majority of envelope proteins bud to form subviral lipoprotein particles of 22 nm of diameter that do not contain a nucleocapsid. In Homo sapiens (Human), this protein is Large envelope protein.